We begin with the raw amino-acid sequence, 72 residues long: Translation initiation factor IF-1 (72 aa).

One can recognise an S1-like domain in the interval 1–72 (MSKSDYIELE…TKGRITFRHK (72 aa)).

It belongs to the IF-1 family. As to quaternary structure, component of the 30S ribosomal translation pre-initiation complex which assembles on the 30S ribosome in the order IF-2 and IF-3, IF-1 and N-formylmethionyl-tRNA(fMet); mRNA recruitment can occur at any time during PIC assembly.

It localises to the cytoplasm. Functionally, one of the essential components for the initiation of protein synthesis. Stabilizes the binding of IF-2 and IF-3 on the 30S subunit to which N-formylmethionyl-tRNA(fMet) subsequently binds. Helps modulate mRNA selection, yielding the 30S pre-initiation complex (PIC). Upon addition of the 50S ribosomal subunit IF-1, IF-2 and IF-3 are released leaving the mature 70S translation initiation complex. This Vesicomyosocius okutanii subsp. Calyptogena okutanii (strain HA) protein is Translation initiation factor IF-1.